We begin with the raw amino-acid sequence, 261 residues long: uncharacterized protein (261 aa).

6 consecutive transmembrane segments (helical) span residues 31-51 (TFLS…TGIV), 71-91 (TNVM…SWLL), 101-121 (LAYI…AGIA), 130-150 (LTSS…ASFI), 167-187 (LLLF…IPYV), and 213-233 (FAWL…YLAI).

Its subcellular location is the cell membrane. This is an uncharacterized protein from Mycoplasma genitalium (strain ATCC 33530 / DSM 19775 / NCTC 10195 / G37) (Mycoplasmoides genitalium).